Consider the following 108-residue polypeptide: MKKKDRDSVFHRNIEIFITILINVVILKSFLLISSWVILVLLLVINDLPMYCYHHSLTYFLGCSKQTYFHRLGYPMQKLRHLLYFYYCYFLPRWKPRRRLTYHRYHPK.

Residues 25-45 (VILKSFLLISSWVILVLLLVI) form a helical membrane-spanning segment.

The protein localises to the membrane. This is an uncharacterized protein from Saccharomyces cerevisiae (strain ATCC 204508 / S288c) (Baker's yeast).